The sequence spans 81 residues: ATP synthase subunit c, chloroplastic (81 aa).

The next 2 membrane-spanning stretches (helical) occupy residues 3-23 (PIISAASVIAAGLAVGLASIG) and 57-77 (LAFMEALTIYGLVVALALLFA).

Belongs to the ATPase C chain family. As to quaternary structure, F-type ATPases have 2 components, F(1) - the catalytic core - and F(0) - the membrane proton channel. F(1) has five subunits: alpha(3), beta(3), gamma(1), delta(1), epsilon(1). F(0) has four main subunits: a(1), b(1), b'(1) and c(10-14). The alpha and beta chains form an alternating ring which encloses part of the gamma chain. F(1) is attached to F(0) by a central stalk formed by the gamma and epsilon chains, while a peripheral stalk is formed by the delta, b and b' chains.

The protein resides in the plastid. It localises to the chloroplast thylakoid membrane. In terms of biological role, f(1)F(0) ATP synthase produces ATP from ADP in the presence of a proton or sodium gradient. F-type ATPases consist of two structural domains, F(1) containing the extramembraneous catalytic core and F(0) containing the membrane proton channel, linked together by a central stalk and a peripheral stalk. During catalysis, ATP synthesis in the catalytic domain of F(1) is coupled via a rotary mechanism of the central stalk subunits to proton translocation. Functionally, key component of the F(0) channel; it plays a direct role in translocation across the membrane. A homomeric c-ring of between 10-14 subunits forms the central stalk rotor element with the F(1) delta and epsilon subunits. The chain is ATP synthase subunit c, chloroplastic from Phaseolus vulgaris (Kidney bean).